The chain runs to 552 residues: Urocanate hydratase (552 aa).

Residues 49–50 (GG), Gln127, 173–175 (GMG), Asp193, 239–240 (NA), 260–264 (QTSAH), 270–271 (YI), and Tyr319 each bind NAD(+). Cys407 is an active-site residue. Gly489 contacts NAD(+).

The protein belongs to the urocanase family. NAD(+) serves as cofactor.

It is found in the cytoplasm. The catalysed reaction is 4-imidazolone-5-propanoate = trans-urocanate + H2O. The protein operates within amino-acid degradation; L-histidine degradation into L-glutamate; N-formimidoyl-L-glutamate from L-histidine: step 2/3. Functionally, catalyzes the conversion of urocanate to 4-imidazolone-5-propionate. The sequence is that of Urocanate hydratase from Bacillus cereus (strain G9842).